The sequence spans 181 residues: Protein GrpE (181 aa).

It belongs to the GrpE family. In terms of assembly, homodimer.

It localises to the cytoplasm. In terms of biological role, participates actively in the response to hyperosmotic and heat shock by preventing the aggregation of stress-denatured proteins, in association with DnaK and GrpE. It is the nucleotide exchange factor for DnaK and may function as a thermosensor. Unfolded proteins bind initially to DnaJ; upon interaction with the DnaJ-bound protein, DnaK hydrolyzes its bound ATP, resulting in the formation of a stable complex. GrpE releases ADP from DnaK; ATP binding to DnaK triggers the release of the substrate protein, thus completing the reaction cycle. Several rounds of ATP-dependent interactions between DnaJ, DnaK and GrpE are required for fully efficient folding. This is Protein GrpE from Delftia acidovorans (strain DSM 14801 / SPH-1).